The following is a 1416-amino-acid chain: DNA-directed RNA polymerase subunit beta' (1416 aa).

Zn(2+)-binding residues include Cys-71, Cys-73, Cys-86, and Cys-89. Residues Asp-461, Asp-463, and Asp-465 each coordinate Mg(2+). Zn(2+) contacts are provided by Cys-815, Cys-889, Cys-896, and Cys-899.

The protein belongs to the RNA polymerase beta' chain family. In terms of assembly, the RNAP catalytic core consists of 2 alpha, 1 beta, 1 beta' and 1 omega subunit. When a sigma factor is associated with the core the holoenzyme is formed, which can initiate transcription. It depends on Mg(2+) as a cofactor. Zn(2+) is required as a cofactor.

It catalyses the reaction RNA(n) + a ribonucleoside 5'-triphosphate = RNA(n+1) + diphosphate. Its function is as follows. DNA-dependent RNA polymerase catalyzes the transcription of DNA into RNA using the four ribonucleoside triphosphates as substrates. The chain is DNA-directed RNA polymerase subunit beta' from Haemophilus influenzae (strain 86-028NP).